Reading from the N-terminus, the 287-residue chain is Aquaporin PIP1-2 (287 aa).

The segment at 1 to 37 (MEGKEEDVRLGANKFTERQPIGTAAQSQDKDYKEPPP) is disordered. Residues 1–55 (MEGKEEDVRLGANKFTERQPIGTAAQSQDKDYKEPPPAPLFEPGELSSWSFYRAG) lie on the Cytoplasmic side of the membrane. The chain crosses the membrane as a helical span at residues 56-76 (IAEFVATFLFLYITILTVMGV). Residues 77–89 (VKSSTKCSTVGIQ) are Extracellular-facing. Residues 90 to 110 (GIAWAFGGMIFALVYCTAGIS) form a helical membrane-spanning segment. Residues 111–133 (GGHINPAVTFGLFLARKLSLTRA) are Cytoplasmic-facing. The NPA 1 motif lies at 115–117 (NPA). Residues 134–154 (LFYMVMQCLGAICGAGVVKGF) form a helical membrane-spanning segment. Residues 155-175 (QKGLYENNGGGANVVAPGYTK) are Extracellular-facing. Residues 176–196 (GDGLGAEIVGTFILVYTVFSA) traverse the membrane as a helical segment. Residues 197-209 (TDAKRSARDSHVP) are Cytoplasmic-facing. The chain crosses the membrane as a helical span at residues 210-230 (ILAPLPIGFAVFLVHLATIPI). Over 231 to 257 (TGTGINPARSLGAAIIYNKGHAWDDHW) the chain is Extracellular. The NPA 2 signature appears at 236 to 238 (NPA). Residues 258 to 278 (IFWVGPFIGAALAALYHQVVI) traverse the membrane as a helical segment. Residues 279-287 (RAIPFKSRS) are Cytoplasmic-facing.

It belongs to the MIP/aquaporin (TC 1.A.8) family. PIP (TC 1.A.8.11) subfamily. As to expression, barely detectable in roots, leaves and fruits.

It localises to the cell membrane. Functionally, water channel required to facilitate the transport of water across cell membrane; mercury-insensitive. Contributes to the tolerance to multiple abiotic stresses including salt (NaCl), cold and water deprivation, by modulating cytosolic K(+)/Na(+) ratio, maintaining osmotic balance, and reducing membrane injury (e.g. oxidative injury). The sequence is that of Aquaporin PIP1-2 from Musa acuminata subsp. malaccensis (Wild banana).